We begin with the raw amino-acid sequence, 121 residues long: NAD(P)H-quinone oxidoreductase subunit 3, chloroplastic (121 aa).

The next 3 membrane-spanning stretches (helical) occupy residues 10 to 30 (FFIFLLLASVIPILAFSISKF), 65 to 85 (MFALVFVIFDVETVFLYPWAM), and 90 to 110 (LGLSAFIEALVFVFILIIGLV).

It belongs to the complex I subunit 3 family. NDH is composed of at least 16 different subunits, 5 of which are encoded in the nucleus.

The protein localises to the plastid. The protein resides in the chloroplast thylakoid membrane. It carries out the reaction a plastoquinone + NADH + (n+1) H(+)(in) = a plastoquinol + NAD(+) + n H(+)(out). The catalysed reaction is a plastoquinone + NADPH + (n+1) H(+)(in) = a plastoquinol + NADP(+) + n H(+)(out). NDH shuttles electrons from NAD(P)H:plastoquinone, via FMN and iron-sulfur (Fe-S) centers, to quinones in the photosynthetic chain and possibly in a chloroplast respiratory chain. The immediate electron acceptor for the enzyme in this species is believed to be plastoquinone. Couples the redox reaction to proton translocation, and thus conserves the redox energy in a proton gradient. In Physcomitrium patens (Spreading-leaved earth moss), this protein is NAD(P)H-quinone oxidoreductase subunit 3, chloroplastic.